The primary structure comprises 170 residues: UPF0260 protein RPC_1790 (170 aa).

Belongs to the UPF0260 family.

The polypeptide is UPF0260 protein RPC_1790 (Rhodopseudomonas palustris (strain BisB18)).